Reading from the N-terminus, the 122-residue chain is Ribosome-binding factor A (122 aa).

It belongs to the RbfA family. In terms of assembly, monomer. Binds 30S ribosomal subunits, but not 50S ribosomal subunits or 70S ribosomes.

It localises to the cytoplasm. In terms of biological role, one of several proteins that assist in the late maturation steps of the functional core of the 30S ribosomal subunit. Associates with free 30S ribosomal subunits (but not with 30S subunits that are part of 70S ribosomes or polysomes). Required for efficient processing of 16S rRNA. May interact with the 5'-terminal helix region of 16S rRNA. The chain is Ribosome-binding factor A from Albidiferax ferrireducens (strain ATCC BAA-621 / DSM 15236 / T118) (Rhodoferax ferrireducens).